The following is a 315-amino-acid chain: Transaldolase (315 aa).

Lys131 functions as the Schiff-base intermediate with substrate in the catalytic mechanism.

It belongs to the transaldolase family. Type 1 subfamily. In terms of assembly, homodimer.

Its subcellular location is the cytoplasm. The enzyme catalyses D-sedoheptulose 7-phosphate + D-glyceraldehyde 3-phosphate = D-erythrose 4-phosphate + beta-D-fructose 6-phosphate. It functions in the pathway carbohydrate degradation; pentose phosphate pathway; D-glyceraldehyde 3-phosphate and beta-D-fructose 6-phosphate from D-ribose 5-phosphate and D-xylulose 5-phosphate (non-oxidative stage): step 2/3. In terms of biological role, transaldolase is important for the balance of metabolites in the pentose-phosphate pathway. The sequence is that of Transaldolase from Actinobacillus pleuropneumoniae serotype 3 (strain JL03).